A 143-amino-acid chain; its full sequence is Deoxyuridine 5'-triphosphate nucleotidohydrolase (143 aa).

The protein belongs to the dUTPase family. The cofactor is Mg(2+).

The catalysed reaction is dUTP + H2O = dUMP + diphosphate + H(+). In terms of biological role, this enzyme is involved in nucleotide metabolism: it produces dUMP, the immediate precursor of thymidine nucleotides and it decreases the intracellular concentration of dUTP so that uracil cannot be incorporated into DNA. The protein is Deoxyuridine 5'-triphosphate nucleotidohydrolase (DUT) of Yaba monkey tumor virus (strain VR587) (YMTV).